A 1235-amino-acid polypeptide reads, in one-letter code: ATP-dependent helicase/nuclease subunit A (1235 aa).

A UvrD-like helicase ATP-binding domain is found at 12–482 (SLWTDDQWKA…IDLSQNFRSR (471 aa)). Residue 33–40 (AAAGSGKT) participates in ATP binding. Residues 509 to 800 (AAELTLGANF…RMMTIHASKG (292 aa)) form the UvrD-like helicase C-terminal domain.

Belongs to the helicase family. AddA subfamily. As to quaternary structure, heterodimer of AddA and AddB/RexB. The cofactor is Mg(2+).

The catalysed reaction is Couples ATP hydrolysis with the unwinding of duplex DNA by translocating in the 3'-5' direction.. The enzyme catalyses ATP + H2O = ADP + phosphate + H(+). The heterodimer acts as both an ATP-dependent DNA helicase and an ATP-dependent, dual-direction single-stranded exonuclease. Recognizes the chi site generating a DNA molecule suitable for the initiation of homologous recombination. The AddA nuclease domain is required for chi fragment generation; this subunit has the helicase and 3' -&gt; 5' nuclease activities. This chain is ATP-dependent helicase/nuclease subunit A, found in Listeria monocytogenes serovar 1/2a (strain ATCC BAA-679 / EGD-e).